The primary structure comprises 108 residues: Synaptic plasticity regulator PANTS (108 aa).

The disordered stretch occupies residues 58-108 (KNHSTQAKDSLQESERKRLADQRKFTPVWELRQKPPSDWHLPLNQGEPQDP). A compositionally biased stretch (basic and acidic residues) spans 67 to 81 (SLQESERKRLADQRK).

This sequence belongs to the UPF0545 family. Post-translationally, rapidly degraded by proteolysis following neuronal stimulation, resulting in increased AMPA receptor clustering.

It localises to the synapse. Its subcellular location is the synaptic cleft. Its function is as follows. Negatively regulates long-term potentiation and modulates adult synaptic plasticity. In Danio rerio (Zebrafish), this protein is Synaptic plasticity regulator PANTS.